Consider the following 87-residue polypeptide: DNA-directed RNA polymerase subunit omega (87 aa).

The protein belongs to the RNA polymerase subunit omega family. The RNAP catalytic core consists of 2 alpha, 1 beta, 1 beta' and 1 omega subunit. When a sigma factor is associated with the core the holoenzyme is formed, which can initiate transcription.

It carries out the reaction RNA(n) + a ribonucleoside 5'-triphosphate = RNA(n+1) + diphosphate. In terms of biological role, promotes RNA polymerase assembly. Latches the N- and C-terminal regions of the beta' subunit thereby facilitating its interaction with the beta and alpha subunits. In Pseudomonas putida (strain ATCC 700007 / DSM 6899 / JCM 31910 / BCRC 17059 / LMG 24140 / F1), this protein is DNA-directed RNA polymerase subunit omega.